We begin with the raw amino-acid sequence, 526 residues long: Probable feruloyl esterase B-1 (526 aa).

The signal sequence occupies residues M1–A19. Cystine bridges form between C28–C75 and C63–C114. 4 N-linked (GlcNAc...) asparagine glycosylation sites follow: N53, N85, N98, and N138. Cystine bridges form between C187-C441, C256-C273, and C282-C291. S188 acts as the Acyl-ester intermediate in catalysis. An N-linked (GlcNAc...) asparagine glycan is attached at N246. Residues D257, D260, A262, D264, and I266 each coordinate Ca(2+). Residues N287 and N311 are each glycosylated (N-linked (GlcNAc...) asparagine). Active-site charge relay system residues include D400 and H440. N490 and N516 each carry an N-linked (GlcNAc...) asparagine glycan. Cysteines 503 and 525 form a disulfide.

This sequence belongs to the tannase family.

It is found in the secreted. The enzyme catalyses feruloyl-polysaccharide + H2O = ferulate + polysaccharide.. In terms of biological role, involved in degradation of plant cell walls. Hydrolyzes the feruloyl-arabinose ester bond in arabinoxylans as well as the feruloyl-galactose and feruloyl-arabinose ester bonds in pectin. The chain is Probable feruloyl esterase B-1 (faeB-1) from Aspergillus flavus (strain ATCC 200026 / FGSC A1120 / IAM 13836 / NRRL 3357 / JCM 12722 / SRRC 167).